We begin with the raw amino-acid sequence, 356 residues long: N-methyltransferase 4 (356 aa).

Residues 93 to 94, 128 to 136, and 155 to 160 contribute to the S-adenosyl-L-methionine site; these read QS, ILDIGCGFG, and TNSAEQ.

The protein belongs to the CFA/CMAS family. In terms of tissue distribution, expressed in stems, roots, flower buds and leaves.

Its function is as follows. Probable N-methyltransferase not involved in benzylisoquinoline metabolism. Shows no detectable activity with (s)-coclaurine, (R)- or (S)-reticuline, papaverine or (R,S)-tetrahydropapaverine. The chain is N-methyltransferase 4 (NMT4) from Papaver somniferum (Opium poppy).